Consider the following 270-residue polypeptide: Glucan endo-1,3-beta-glucosidase (270 aa).

Positions methionine 1–glycine 18 are cleaved as a signal peptide. A GH16 domain is found at leucine 22–asparagine 270. Residue glutamate 137 is the Nucleophile of the active site. The active-site Proton donor is the glutamate 142.

Belongs to the glycosyl hydrolase 16 family.

Its subcellular location is the secreted. The enzyme catalyses Hydrolysis of (1-&gt;3)-beta-D-glucosidic linkages in (1-&gt;3)-beta-D-glucans.. Its activity is regulated as follows. Ca(2+) does not affect the enzyme activity nor the thermostability. Other cations, such as Mg(2+), Mn(2+), Cu(2+), Zn(2+), Ag(+) or Hg(2+) do not cause any serious adverse effect on the activity. Also no significant change in the activity in response to the addition of 1 mM EDTA. In terms of biological role, hydrolyzes laminarin majorily to glucose (G1), laminaribiose (L2), laminaritriose (L3), laminaritetraose (L4) and laminaripentaose (L5). Hydrolyzes laminarioligosaccharides L3, L4, L5 and laminarihexaose (L6) to G1, L2 and L3. Hardly hydrolyzes L2. Does not hydrolyze lichenan, pustulan, carboxymethyl cellulose, locust bean gum or soluble starch. The sequence is that of Glucan endo-1,3-beta-glucosidase from Cryptopygus antarcticus (Antarctic springtail).